The primary structure comprises 207 residues: Ras-related protein Rab7 (207 aa).

Residues 15–22 (GDSGVGKT), 63–67 (DTAGQ), and 125–128 (NKID) each bind GTP. S-geranylgeranyl cysteine attachment occurs at residues Cys205 and Cys207. Cys207 carries the cysteine methyl ester modification.

Belongs to the small GTPase superfamily. Rab family.

It is found in the cell membrane. Functionally, protein transport. Probably involved in vesicular traffic. The protein is Ras-related protein Rab7 of Prunus armeniaca (Apricot).